The following is a 126-amino-acid chain: MAVTKKRKEKKNVYEGNVYIQATFNNTIITVTDLQGNALSWASSGGLGFNGAKKSTPFAAQTVAEAAVQKAQQCGLREVHVFVKGPGIGRESAIRMLGTMGLRVRSIRDITPIPHNGCRPRKTRRI.

Belongs to the universal ribosomal protein uS11 family. In terms of assembly, part of the 30S ribosomal subunit. Interacts with proteins S7 and S18. Binds to IF-3.

Functionally, located on the platform of the 30S subunit, it bridges several disparate RNA helices of the 16S rRNA. Forms part of the Shine-Dalgarno cleft in the 70S ribosome. The chain is Small ribosomal subunit protein uS11 from Treponema pallidum (strain Nichols).